The primary structure comprises 124 residues: Alpha-amylase inhibitor 0.53 (124 aa).

Disulfide bonds link C20-C41, C28-C83, C42-C99, and C54-C115.

The protein belongs to the protease inhibitor I6 (cereal trypsin/alpha-amylase inhibitor) family. Homodimer. The disulfide bonds are essential for the inhibitor activity. In terms of tissue distribution, endosperm.

It localises to the secreted. In terms of biological role, alpha-amylase inhibitor. The chain is Alpha-amylase inhibitor 0.53 from Triticum aestivum (Wheat).